The chain runs to 620 residues: Chaperone protein HscA homolog (620 aa).

It belongs to the heat shock protein 70 family.

In terms of biological role, chaperone involved in the maturation of iron-sulfur cluster-containing proteins. Has a low intrinsic ATPase activity which is markedly stimulated by HscB. The protein is Chaperone protein HscA homolog of Paracidovorax citrulli (strain AAC00-1) (Acidovorax citrulli).